We begin with the raw amino-acid sequence, 475 residues long: MADVTNGERCASPQELFSSIAAQGELVKSLKARKAPKEEIDSAVKMLLSLKTSYKEAMGEDYKADCPPGNSTPDSHGDPEAVDDKEDFVDPWTVRTSSAKGIDYDKLIVQFGSSKIDKELVNRIERATGQRPHRFLRRGIFFSHRDMNQVLDAYENKKPFYLYTGRGPSSEAMHVGHLIPFIFTKWLQDVFDVPLVVQMSDDEKYLWKDLTLEQVYGYTLENAKDIIACGFDVNKTFIFSDLDYMGMSPGFYKNVVKIQKHVTFNQVKGIFGFTDSDCIGKISFPAIQAAPSFSNSFPQIFHGQADIQCLIPCAIDQDPYFRMTRDVAPRIGYPKPALLHSTFFPALQGAQTKMSASDPNSSIFLTDTAKQIKTKVNKHAFSGGRDTIEEHRQFGGNCDVDVSFMYLTFFLEDDDKLEQIRKDYSSGAMLTGELKKELIDVLQPLVAEHQARRKEVTDEMVKEFMTPRQLCFHYQ.

The region spanning 12–68 is the WHEP-TRS domain; that stretch reads SPQELFSSIAAQGELVKSLKARKAPKEEIDSAVKMLLSLKTSYKEAMGEDYKADCPP. The tract at residues 61–87 is disordered; sequence DYKADCPPGNSTPDSHGDPEAVDDKED. Residue lysine 158 is modified to N6-succinyllysine. The 'HIGH' region signature appears at 168–177; the sequence is PSSEAMHVGH. Positions 353–357 match the 'KMSKS' region motif; that stretch reads KMSAS. At serine 355 the chain carries Phosphoserine.

The protein belongs to the class-I aminoacyl-tRNA synthetase family. As to quaternary structure, homodimer. Interacts with oxidized form of GAPDH. In terms of processing, proteolytic cleavage generates 2 forms; T1-TrpRS and T2-TrpRS.

Its subcellular location is the cytoplasm. It carries out the reaction tRNA(Trp) + L-tryptophan + ATP = L-tryptophyl-tRNA(Trp) + AMP + diphosphate + H(+). Catalyzes the attachment of tryptophan to tRNA(Trp) in a two-step reaction: tryptophan is first activated by ATP to form Trp-AMP and then transferred to the acceptor end of the tRNA(Trp). Could also possess an angiostatic activity. This Oryctolagus cuniculus (Rabbit) protein is Tryptophan--tRNA ligase, cytoplasmic (WARS1).